The primary structure comprises 802 residues: Fibroblast growth factor receptor 4 (802 aa).

Residues 1–21 (MRLLLALLGVLLSVPGPPVLS) form the signal peptide. One can recognise an Ig-like C2-type 1 domain in the interval 22–118 (LEASEEVELE…VLQNLTLITG (97 aa)). Over 22–369 (LEASEEVELE…AAAPEARYTD (348 aa)) the chain is Extracellular. Cys57 and Cys101 form a disulfide bridge. N-linked (GlcNAc...) asparagine glycosylation occurs at Asn112. The tract at residues 119–148 (DSLTSSNDDEDPKSHRDPSNRHSYPQQAPY) is disordered. 2 Ig-like C2-type domains span residues 152-240 (PQRM…YLLD) and 249-349 (PILQ…AWLT). Residues Cys172 and Cys224 are joined by a disulfide bond. N-linked (GlcNAc...) asparagine glycosylation is found at Asn258, Asn290, Asn311, and Asn322. A disulfide bridge links Cys271 with Cys333. A helical transmembrane segment spans residues 370-390 (IILYASGSLALAVLLLLAGLY). Phosphotyrosine; in variant R-388 is present on Tyr390. Residues 391–802 (RGQALHGRHP…SFPFGSGVQT (412 aa)) lie on the Cytoplasmic side of the membrane. One can recognise a Protein kinase domain in the interval 467–755 (LVLGKPLGEG…VLLAVSEEYL (289 aa)). ATP is bound by residues 473 to 481 (LGEGCFGQV) and Lys503. Ser573 bears the Phosphoserine mark. The active-site Proton acceptor is the Asp612. A phosphotyrosine; by autocatalysis mark is found at Tyr642, Tyr643, and Tyr754.

Belongs to the protein kinase superfamily. Tyr protein kinase family. Fibroblast growth factor receptor subfamily. In terms of assembly, monomer. Homodimer after ligand binding. Interacts with FGF1, FGF2, FGF4, FGF6, FGF8, FGF9, FGF16, FGF17, FGF18, FGF19, FGF21 and FGF23 (in vitro). Binding affinity for FGF family members is enhanced by interactions between FGFs and heparan sulfate proteoglycans. Interacts with KLB; this strongly increases the affinity for FGF19 and FGF23. Affinity for FGF19 is strongly increased by KLB and sulfated glycosaminoglycans. KLB and KL both interact with the core-glycosylated FGFR4 in the endoplasmic reticulum and promote its degradation, so that only FGFR4 with fully mature N-glycans is expressed at the cell surface. Identified in a complex with NCAM1, CDH2, PLCG1, FRS2, SRC, SHC1, GAP43 and CTTN. Interacts with MMP14 and HIP1. Interacts with STAT3. Post-translationally, N-glycosylated. Full maturation of the glycan chains in the Golgi is essential for high affinity interaction with FGF19. Ubiquitinated. Subject to proteasomal degradation when not fully glycosylated. In terms of processing, autophosphorylated. Binding of FGF family members together with heparan sulfate proteoglycan or heparin promotes receptor dimerization and autophosphorylation on tyrosine residues. Autophosphorylation occurs in trans between the two FGFR molecules present in the dimer. Expressed in gastrointestinal epithelial cells, pancreas, and gastric and pancreatic cancer cell lines.

The protein localises to the cell membrane. It localises to the endosome. Its subcellular location is the endoplasmic reticulum. It is found in the secreted. The enzyme catalyses L-tyrosyl-[protein] + ATP = O-phospho-L-tyrosyl-[protein] + ADP + H(+). Present in an inactive conformation in the absence of bound ligand. Ligand binding leads to dimerization and activation by autophosphorylation on tyrosine residues. In terms of biological role, tyrosine-protein kinase that acts as a cell-surface receptor for fibroblast growth factors and plays a role in the regulation of cell proliferation, differentiation and migration, and in regulation of lipid metabolism, bile acid biosynthesis, glucose uptake, vitamin D metabolism and phosphate homeostasis. Required for normal down-regulation of the expression of CYP7A1, the rate-limiting enzyme in bile acid synthesis, in response to FGF19. Phosphorylates PLCG1 and FRS2. Ligand binding leads to the activation of several signaling cascades. Activation of PLCG1 leads to the production of the cellular signaling molecules diacylglycerol and inositol 1,4,5-trisphosphate. Phosphorylation of FRS2 triggers recruitment of GRB2, GAB1, PIK3R1 and SOS1, and mediates activation of RAS, MAPK1/ERK2, MAPK3/ERK1 and the MAP kinase signaling pathway, as well as of the AKT1 signaling pathway. Promotes SRC-dependent phosphorylation of the matrix protease MMP14 and its lysosomal degradation. FGFR4 signaling is down-regulated by receptor internalization and degradation; MMP14 promotes internalization and degradation of FGFR4. Mutations that lead to constitutive kinase activation or impair normal FGFR4 inactivation lead to aberrant signaling. In Homo sapiens (Human), this protein is Fibroblast growth factor receptor 4 (FGFR4).